The chain runs to 439 residues: GTPase Der (439 aa).

EngA-type G domains lie at 4–169 (AMVA…PEND) and 177–352 (IKIA…EEYN). Residues 10–17 (GRPNVGKS), 57–61 (DTGGL), 120–123 (NKVD), 183–190 (GRPNVGKS), 230–234 (DTAGI), and 295–298 (NKWD) contribute to the GTP site. The 85-residue stretch at 353 to 437 (KRITTGLLNN…PIVISTKKRG (85 aa)) folds into the KH-like domain.

This sequence belongs to the TRAFAC class TrmE-Era-EngA-EngB-Septin-like GTPase superfamily. EngA (Der) GTPase family. In terms of assembly, associates with the 50S ribosomal subunit.

Its function is as follows. GTPase that plays an essential role in the late steps of ribosome biogenesis. The sequence is that of GTPase Der from Caldanaerobacter subterraneus subsp. tengcongensis (strain DSM 15242 / JCM 11007 / NBRC 100824 / MB4) (Thermoanaerobacter tengcongensis).